We begin with the raw amino-acid sequence, 859 residues long: Alanine--tRNA ligase (859 aa).

Zn(2+) contacts are provided by His562, His566, Cys664, and His668.

The protein belongs to the class-II aminoacyl-tRNA synthetase family. It depends on Zn(2+) as a cofactor.

It is found in the cytoplasm. The catalysed reaction is tRNA(Ala) + L-alanine + ATP = L-alanyl-tRNA(Ala) + AMP + diphosphate. In terms of biological role, catalyzes the attachment of alanine to tRNA(Ala) in a two-step reaction: alanine is first activated by ATP to form Ala-AMP and then transferred to the acceptor end of tRNA(Ala). Also edits incorrectly charged Ser-tRNA(Ala) and Gly-tRNA(Ala) via its editing domain. This is Alanine--tRNA ligase from Aliivibrio fischeri (strain ATCC 700601 / ES114) (Vibrio fischeri).